The following is a 308-amino-acid chain: Eukaryotic translation initiation factor 3 subunit G-A (308 aa).

2 disordered regions span residues 1-35 (MPTGDYDSKPSWADQVEEEGIDAEPLSPQIRKPDP) and 177-226 (TGDK…ADDN). Residues 185-194 (GAEPEPAQAP) show a composition bias toward low complexity. The segment covering 209 to 226 (GGSRRGESMQPNRRADDN) has biased composition (basic and acidic residues). The RRM domain maps to 227-305 (ATIRVTNLSE…LILNVEWAKP (79 aa)).

Belongs to the eIF-3 subunit G family. Component of the eukaryotic translation initiation factor 3 (eIF-3) complex, which is composed of 13 subunits: eif3a, eif3b, eif3c, eif3d, eif3e, eif3f, eif3g, eif3h, eif3i, eif3j, eif3k, eif3l and eif3m.

It localises to the cytoplasm. RNA-binding component of the eukaryotic translation initiation factor 3 (eIF-3) complex, which is involved in protein synthesis of a specialized repertoire of mRNAs and, together with other initiation factors, stimulates binding of mRNA and methionyl-tRNAi to the 40S ribosome. The eIF-3 complex specifically targets and initiates translation of a subset of mRNAs involved in cell proliferation. This subunit can bind 18S rRNA. The protein is Eukaryotic translation initiation factor 3 subunit G-A (eif3g-a) of Xenopus laevis (African clawed frog).